A 50-amino-acid polypeptide reads, in one-letter code: Protein hunchback (50 aa).

3 C2H2-type zinc fingers span residues 1–5 (HLRNH), 11–33 (FKCG…MKSH), and 39–50 (YRCANCCYATKY).

Belongs to the hunchback C2H2-type zinc-finger protein family.

The protein localises to the nucleus. Functionally, gap class segmentation protein that controls development of head structures. This is Protein hunchback (hb) from Pholcus phalangioides (Longbodied cellar spider).